The chain runs to 320 residues: Porphobilinogen deaminase (320 aa).

Cysteine 251 carries the S-(dipyrrolylmethanemethyl)cysteine modification.

It belongs to the HMBS family. Monomer. It depends on dipyrromethane as a cofactor.

The enzyme catalyses 4 porphobilinogen + H2O = hydroxymethylbilane + 4 NH4(+). The protein operates within porphyrin-containing compound metabolism; protoporphyrin-IX biosynthesis; coproporphyrinogen-III from 5-aminolevulinate: step 2/4. Tetrapolymerization of the monopyrrole PBG into the hydroxymethylbilane pre-uroporphyrinogen in several discrete steps. The chain is Porphobilinogen deaminase from Phenylobacterium zucineum (strain HLK1).